We begin with the raw amino-acid sequence, 83 residues long: Hepcidin-2 (83 aa).

Residues 1–26 (MALSTRTQAACLLLLLLASLSSTTYL) form the signal peptide. Positions 27–53 (QQQMRQTTELQPLHGEESRADIAIPMQ) are excised as a propeptide. Cystine bridges form between Cys-65–Cys-81, Cys-68–Cys-71, Cys-69–Cys-77, and Cys-72–Cys-80.

It belongs to the hepcidin family. As to expression, highly expressed in the liver and to a much lesser extent in the heart. Also expressed in pancreas.

Its subcellular location is the secreted. Seems to act as a signaling molecule involved in the maintenance of iron homeostasis. The sequence is that of Hepcidin-2 (Hamp2) from Mus musculus (Mouse).